Consider the following 91-residue polypeptide: Small ribosomal subunit protein uS19 (91 aa).

Belongs to the universal ribosomal protein uS19 family.

Its function is as follows. Protein S19 forms a complex with S13 that binds strongly to the 16S ribosomal RNA. In Bordetella pertussis (strain Tohama I / ATCC BAA-589 / NCTC 13251), this protein is Small ribosomal subunit protein uS19.